An 852-amino-acid polypeptide reads, in one-letter code: Bifunctional uridylyltransferase/uridylyl-removing enzyme (852 aa).

Residues 1–318 (MPANLSSALE…STPLRVTLRI (318 aa)) form a uridylyltransferase region. Positions 319–672 (DDDYIQVNNQ…SRILPKSDSF (354 aa)) are uridylyl-removing. An HD domain is found at 436 to 558 (VDDHILTVVR…VQTHERLSAL (123 aa)). ACT domains lie at 673 to 757 (QVMV…SRSR) and 785 to 852 (SVEI…EQLS).

This sequence belongs to the GlnD family. Mg(2+) serves as cofactor.

The enzyme catalyses [protein-PII]-L-tyrosine + UTP = [protein-PII]-uridylyl-L-tyrosine + diphosphate. It carries out the reaction [protein-PII]-uridylyl-L-tyrosine + H2O = [protein-PII]-L-tyrosine + UMP + H(+). Uridylyltransferase (UTase) activity is inhibited by glutamine, while glutamine activates uridylyl-removing (UR) activity. Functionally, modifies, by uridylylation and deuridylylation, the PII regulatory proteins (GlnB and homologs), in response to the nitrogen status of the cell that GlnD senses through the glutamine level. Under low glutamine levels, catalyzes the conversion of the PII proteins and UTP to PII-UMP and PPi, while under higher glutamine levels, GlnD hydrolyzes PII-UMP to PII and UMP (deuridylylation). Thus, controls uridylylation state and activity of the PII proteins, and plays an important role in the regulation of nitrogen assimilation and metabolism. The polypeptide is Bifunctional uridylyltransferase/uridylyl-removing enzyme (Neisseria meningitidis serogroup B (strain ATCC BAA-335 / MC58)).